Consider the following 487-residue polypeptide: MNKFARHFLPLSLRVRFLLATAGVVLVLSLAYGIVALVGYSVSFDKTTFRLLRGESNLFYTLAKWENNKISVELPENLDMQSPTMTLIYDETGKLLWTQRNIPWLIKSIQPEWLKTNGFHEIETNVDATSTLLSEDHSAQEKLKEVREDDDDAEMTHSVAVNIYPATTRMPQLTIVVVDTIPIELKRSYMVWSWFVYVLAANLLLVIPLLWIAAWWSLRPIEALAREVRELEDHHREMLNPETTRELTSLVRNLNQLLKSERERYNKYRTTLTDLTHSLKTPLAVLQSTLRSLRNEKMSVSKAEPVMLEQISRISQQIGYYLHRASMRGSGVLLSRELHPVAPLLDNLISALNKVYQRKGVNISMDISPEISFVGEQNDFVEVMGNVLDNACKYCLEFVEISARQTDDHLHIFVEDDGPGIPHSKRSLVFDRGQRADTLRPGQGVGLAVAREITEQYAGQIIASDSLLGGARMEVVFGRQHPTQKEE.

The Cytoplasmic segment spans residues 1–16; sequence MNKFARHFLPLSLRVR. The chain crosses the membrane as a helical span at residues 17 to 37; sequence FLLATAGVVLVLSLAYGIVAL. At 38–193 the chain is on the periplasmic side; sequence VGYSVSFDKT…ELKRSYMVWS (156 aa). A divalent metal cation is bound by residues D151 and D152. A helical transmembrane segment spans residues 194–214; sequence WFVYVLAANLLLVIPLLWIAA. The HAMP domain occupies 215–266; sequence WWSLRPIEALAREVRELEDHHREMLNPETTRELTSLVRNLNQLLKSERERYN. At 215-487 the chain is on the cytoplasmic side; that stretch reads WWSLRPIEAL…GRQHPTQKEE (273 aa). The Histidine kinase domain occupies 274–481; it reads DLTHSLKTPL…RMEVVFGRQH (208 aa). H277 carries the post-translational modification Phosphohistidine; by autocatalysis. N386 is a binding site for Mg(2+). ATP-binding positions include 386–394, 416–421, and 435–447; these read NVLDNACKY, DDGPGI, and RADTLRPGQGVGL. Mg(2+) is bound at residue Q443.

As to quaternary structure, homodimer.

The protein localises to the cell inner membrane. The enzyme catalyses ATP + protein L-histidine = ADP + protein N-phospho-L-histidine.. Functionally, member of the two-component regulatory system PhoP/PhoQ which regulates the expression of genes involved in virulence and resistance to host defense antimicrobial peptides. In low periplasmic Mg(2+), PhoQ functions as a membrane-associated protein kinase that undergoes autophosphorylation and subsequently transfers the phosphate to PhoP, which results in the expression of PhoP-activated genes (PAG) and repression of PhoP-repressed genes (PRG). In high periplasmic Mg(2+), acts as a protein phosphatase that dephosphorylates phospho-PhoP, which results in the repression of PAG and may lead to expression of some PRG. Promotes intramacrophage survival of S.typhi. Is required to enhance bacterial resistance to bile in the human intestinal cells. This Salmonella typhi protein is Virulence sensor histidine kinase PhoQ (phoQ).